A 540-amino-acid chain; its full sequence is Zinc transporter ZIP5 (540 aa).

The first 20 residues, 1-20 (MMGSPVSHLLAGFCVWVVLG), serve as a signal peptide directing secretion. At 21-212 (WVGGSVPNLG…PAPPGDLLSA (192 aa)) the chain is on the extracellular side. The N-linked (GlcNAc...) asparagine glycan is linked to Asn-50. Positions 78 to 101 (HGPLTGRAASPAADNSTHRPQNPE) are disordered. Over residues 90–101 (ADNSTHRPQNPE) the composition is skewed to polar residues. Asn-160 carries N-linked (GlcNAc...) asparagine glycosylation. A helical transmembrane segment spans residues 213–233 (LLQSALAVLLLSLPSPLSLLL). Residues 234–244 (LRLLGPRLLRP) are Cytoplasmic-facing. The helical transmembrane segment at 245 to 265 (LLGFLGALAVGTLCGDALLHL) threads the bilayer. The Extracellular segment spans residues 266–287 (LPHAQEGRHAGPGGLPEKDLGP). A helical transmembrane segment spans residues 288-308 (GLSVLGGLFLLFVLENMLGLL). At 309-444 (RHRGLRPRCC…LLQSGLSFRR (136 aa)) the chain is on the cytoplasmic side. The disordered stretch occupies residues 324 to 377 (NLETRNLDPENGSGMALQPLQAAPEPGAQGQREKNSQHPPALAPPGHQGHSHGH). At Ser-336 the chain carries Phosphoserine. His-375 carries the pros-methylhistidine modification. The chain crosses the membrane as a helical span at residues 445 to 465 (LLLLSLVSGALGLGGAVLGVG). The Extracellular segment spans residues 466 to 470 (LSLGP). Residues 471–491 (VPLTPWVFGVTAGVFLYVALV) traverse the membrane as a helical segment. Residues 492 to 508 (DMLPALLRPPEPLPTPH) lie on the Cytoplasmic side of the membrane. Residues 509–529 (VLLQGLGLLLGGGLMLAITLL) form a helical membrane-spanning segment. At 530–540 (EERLLPVTTEG) the chain is on the extracellular side.

This sequence belongs to the ZIP transporter (TC 2.A.5) family. In terms of assembly, homodimer. Methylated at His-375 by METTL9. In terms of processing, N-Glycosylated. In terms of tissue distribution, expressed in liver, kidney, pancreas, small intestine, colon, spleen, fetal liver and fetal kidney.

It localises to the basolateral cell membrane. It catalyses the reaction Zn(2+)(in) = Zn(2+)(out). Uniporter that transports zinc(2+) into polarized cells of enterocytes, pancreatic acinar and endoderm cells across the basolateral membrane and participates, notably, in zinc excretion from the intestine by the uptake of zinc from the blood into the intestine. The transport mechanism is temperature- and concentration-dependent and saturable. In addition, is also a high affinity copper transporter in vitro. Also may regulate glucose-stimulated insulin secretion (GSIS) in islets primarily through the zinc-activated SIRT1-PPARGC1A axis. Could regulate the BMP/TGF-beta (bone morphogenetic protein/transforming growth factor-beta) signaling pathway and modulates extracellular matrix (ECM) proteins of the sclera. Plays a role in eye development. The protein is Zinc transporter ZIP5 of Homo sapiens (Human).